Consider the following 295-residue polypeptide: Nucleotide-binding protein MCA0739 (295 aa).

G8–S15 provides a ligand contact to ATP. D60–N63 contacts GTP.

It belongs to the RapZ-like family.

Functionally, displays ATPase and GTPase activities. In Methylococcus capsulatus (strain ATCC 33009 / NCIMB 11132 / Bath), this protein is Nucleotide-binding protein MCA0739.